Reading from the N-terminus, the 564-residue chain is Major facilitator superfamily transporter MPN_076 (564 aa).

The next 12 helical transmembrane spans lie at 1 to 21, 65 to 85, 89 to 109, 176 to 196, 220 to 240, 249 to 269, 306 to 326, 358 to 378, 404 to 424, 425 to 445, 457 to 477, and 501 to 521; these read MLWA…FVID, ITLL…KFGY, VMIM…GDPL, IAGY…GTTL, NLWG…FQSV, VFIL…FAWF, MIGM…GGWW, AGLP…YMVF, IVIV…FAFV, AIAT…ILIL, VSVL…AFDI, and GAIA…AIVV.

It belongs to the major facilitator superfamily.

It is found in the cell membrane. The protein is Major facilitator superfamily transporter MPN_076 of Mycoplasma pneumoniae (strain ATCC 29342 / M129 / Subtype 1) (Mycoplasmoides pneumoniae).